The primary structure comprises 139 residues: GSK3B-interacting protein (139 aa).

The segment at 1 to 22 (METDCNPMELSSMSGFEEGSEL) is disordered. Residues 41 to 45 (VNDVL) form a required for PRKAR2A interaction; contributes to a protective effect against H(2)O(2)-induced apoptosis region. Positions 115-139 (SPAYREAFGNALLQRLEALKRDGQS) are interaction with GSK3B and acts as a GSK3B inhibitor.

This sequence belongs to the GSKIP family. As to quaternary structure, forms a complex composed of PRKAR2A or PRKAR2B, GSK3B and GSKIP through GSKIP interaction; facilitates PKA-induced phosphorylation of GSK3B leading to GSK3B inactivation; recruits DNM1L through GSK3B for PKA-mediated phosphorylation of DNM1L; promotes beta-catenin degradation through GSK3B-induced phosphorylation of beta-catenin; stabilizes beta-catenin and enhances Wnt-induced signaling through PKA-induced phosphorylation of beta-catenin. Interacts with GSK3B; induces GSK3B-mediated phosphorylation of GSKIP and inhibits GSK3B kinase activity. In terms of processing, phosphorylated by GSK3B. As to expression, detected in heart, brain, placenta, liver, skeletal muscle, kidney, testis, lung and pancreas.

It localises to the cytoplasm. The protein localises to the nucleus. Its function is as follows. A-kinase anchoring protein for GSK3B and PKA that regulates or facilitates their kinase activity towards their targets. The ternary complex enhances Wnt-induced signaling by facilitating the GSK3B- and PKA-induced phosphorylation of beta-catenin leading to beta-catenin degradation and stabilization respectively. Upon cAMP activation, the ternary complex contributes to neuroprotection against oxidative stress-induced apoptosis by facilitating the PKA-induced phosphorylation of DML1 and PKA-induced inactivation of GSK3B. During neurite outgrowth promotes neuron proliferation; while increases beta-catenin-induced transcriptional activity through GSK3B kinase activity inhibition, reduces N-cadherin level to promote cell cycle progression. The sequence is that of GSK3B-interacting protein from Homo sapiens (Human).